Here is a 507-residue protein sequence, read N- to C-terminus: MEDPRRRTTAPRAKKPSAKRAPTQPSRTRAHAESCGPQRGARSRRAERDGDTTEKPRAPGPRVHPARATELTKDAQPSAMDAAGATARPAVRVPQQQAILDPELPAVREPQPPADPEARKVVRGPSHRRGARSTGQPRAPRGSRKEPDKLKKVLDKLRLKRKDISEAAETVNKVVERLLRRMQKRESEFKGVEQLNTGSYYEHVKISAPNEFDVMFKLEVPRIELQEYYETGAFYLVKFKRIPRGNPLSHFLEGEVLSATKMLSKFRKIIKEEVKEIKDIDVSVEKEKPGSPAVTLLIRNPEEISVDIILALESKGSWPISTKEGLPIQGWLGTKVRTNLRREPFYLVPKNAKDGNSFQGETWRLSFSHTEKYILNNHGIEKTCCESSGAKCCRKECLKLMKYLLEQLKKEFQELDAFCSYHVKTAIFHMWTQDPQDSQWDPRNLSSCFDKLLAFFLECLRTEKLDHYFIPKFNLFSQELIDRKSKEFLSKKIEYERNNGFPIFDKL.

A DNA-binding region spans residues 1-146 (MEDPRRRTTA…PRAPRGSRKE (146 aa)). Residues 1–151 (MEDPRRRTTA…GSRKEPDKLK (151 aa)) form a disordered region. The segment covering 7–18 (RTTAPRAKKPSA) has biased composition (basic residues). Over residues 44–57 (RRAERDGDTTEKPR) the composition is skewed to basic and acidic residues. Residues 48–59 (RDGDTTEKPRAP) are required for association with the cell membrane. Position 52 is a phosphothreonine (Thr52). A required for activation upon DNA viral infection region spans residues 119 to 132 (RKVVRGPSHRRGAR). The segment covering 121-131 (VVRGPSHRRGA) has biased composition (basic residues). Positions 154-159 (LDKLRL) match the Nuclear export signal motif. An N6-lactoyllysine modification is found at Lys156. Positions 158-201 (RLKRKDISEAAETVNKVVERLLRRMQKRESEFKGVEQLNTGSYY) are DNA-binding. Glu176 bears the PolyADP-ribosyl glutamic acid mark. Thr197 serves as a coordination point for GTP. Ser199 is a binding site for ATP. Residue Ser199 is modified to Phosphoserine. Position 201 is a phosphotyrosine (Tyr201). 2 residues coordinate Mg(2+): Glu211 and Asp213. Position 213 (Asp213) interacts with 2',3'-cGAMP. Lys217 is covalently cross-linked (Glycyl lysine isopeptide (Lys-Gly) (interchain with G-Cter in SUMO)). Lys271 participates in a covalent cross-link: Glycyl lysine isopeptide (Lys-Gly) (interchain with G-Cter in ubiquitin). Glu272 bears the 5-glutamyl polyglutamate mark. The Nuclear localization signal motif lies at 281 to 291 (DVSVEKEKPGS). Gly290 contacts 2',3'-cGAMP. Ser291 carries the phosphoserine; by CDK1 and PKB modification. A 5-glutamyl glutamate modification is found at Glu302. Asp307 lines the GTP pocket. Asp307 is a Mg(2+) binding site. Asp307 is a binding site for 2',3'-cGAMP. Residues 329 to 370 (QGWLGTKVRTNLRREPFYLVPKNAKDGNSFQGETWRLSFSHT) are interaction with collided ribosomes. Lys335 participates in a covalent cross-link: Glycyl lysine isopeptide (Lys-Gly) (interchain with G-Cter in SUMO); alternate. A Glycyl lysine isopeptide (Lys-Gly) (interchain with G-Cter in ubiquitin); alternate cross-link involves residue Lys335. 2',3'-cGAMP-binding positions include Lys350 and 364-366 (RLS). GTP is bound at residue 364–371 (RLSFSHTE). Residue Glu371 participates in ATP binding. Residue Lys372 forms a Glycyl lysine isopeptide (Lys-Gly) (interchain with G-Cter in SUMO); alternate linkage. A Glycyl lysine isopeptide (Lys-Gly) (interchain with G-Cter in ubiquitin); alternate cross-link involves residue Lys372. At Lys372 the chain carries N6-acetyllysine. The segment at 372 to 395 (KYILNNHGIEKTCCESSGAKCCRK) is DNA-binding. Zn(2+) is bound at residue His378. Lys382 participates in a covalent cross-link: Glycyl lysine isopeptide (Lys-Gly) (interchain with G-Cter in SUMO). The residue at position 382 (Lys382) is an N6-acetyllysine. Zn(2+) contacts are provided by Cys384, Cys385, and Cys392. 2 S-palmitoyl cysteine lipidation sites follow: Cys392 and Cys393. Glycyl lysine isopeptide (Lys-Gly) (interchain with G-Cter in ubiquitin) cross-links involve residues Lys399, Lys402, Lys409, and Lys410. Lys402 is a binding site for ATP. N6-acetyllysine is present on Lys402. At Ser420 the chain carries Phosphoserine. Residue 420 to 424 (SYHVK) coordinates ATP. Cys459 is lipidated: S-palmitoyl cysteine. Lys464 is covalently cross-linked (Glycyl lysine isopeptide (Lys-Gly) (interchain with G-Cter in SUMO); alternate). A Glycyl lysine isopeptide (Lys-Gly) (interchain with G-Cter in ubiquitin); alternate cross-link involves residue Lys464. Lys491 carries the post-translational modification N6-methyllysine.

Belongs to the mab-21 family. As to quaternary structure, monomer in the absence of DNA. Homodimer in presence of dsDNA: forms a 2:2 dimer with two enzymes binding to two DNA molecules. Interacts with nucleosomes; interaction is mainly mediated via histones H2A and H2B and inactivates the nucleotidyltransferase activity by blocking DNA-binding and subsequent activation. Interacts with PQBP1 (via WW domain). Interacts with TRIM14; this interaction recruits USP14, leading to deubiquitinate and stabilize CGAS and promote type I interferon production. Interacts with ZCCHC3; promoting sensing of dsDNA by CGAS. Interacts (when not monomethylated) with (poly-ADP-ribosylated) PARP1; interaction takes place in the nucleus and prevents the formation of the PARP1-TIMELESS complex. Interacts (when monomethylated) with SGF29; interaction with SGF29 prevents interaction with PARP1. Interacts with PCBP2; preventing the formation of liquid-like droplets in which CGAS is activated. Interacts with Irgm1; promoting CGAS degradation. Interacts with DDX41. Mg(2+) serves as cofactor. The cofactor is Mn(2+). Zn(2+) is required as a cofactor. The N-terminal disordered part (1-146) is phosphorylated by AURKB during the G2-M transition, blocking CGAS liquid phase separation and preventing activation. Phosphorylation at Tyr-201 by BLK promotes cytosolic retention. Localizes into the nucleus following dephosphorylation at Tyr-201. Phosphorylation at Ser-420 activates the nucleotidyltransferase activity. Dephosphorylation at Ser-420 by PPP6C impairs its ability to bind GTP, thereby inactivating it. Phosphorylation at Thr-52 and Ser-199 by PRKDC inhibits its cyclic GMP-AMP synthase activity by impairing homodimerization and activation. Phosphorylation at Ser-291 by AKT (AKT1, AKT2 or AKT3) suppresses the nucleotidyltransferase activity. Phosphorylation at Ser-291 by CDK1 during mitosis leads to its inhibition, thereby preventing CGAS activation by self-DNA during mitosis. Dephosphorylated at Ser-291 by protein phosphatase PP1 upon mitotic exit. In terms of processing, ubiquitinated at Lys-402 via 'Lys-48'-linked polyubiquitin chains, leading to its SQSTM1-mediated autophagic degradation. Interaction with TRIM14 promotes recruitment of USP14, leading to deubiquitinate Lys-402 and stabilize CGAS. Ubiquitinated at Lys-372 by RNF185 via 'Lys-27'-linked polyubiquitination, promoting CGAS cyclic GMP-AMP synthase activity. Monoubiquitination at Lys-335 by TRIM56 promotes oligomerization and subsequent activation. Monoubiquitination by TRIM41 promotes CGAS activation. Ubiquitination at Lys-271 and Lys-464 via 'Lys-48'-linked polyubiquitination promotes its degradation. Deubiquitination at Lys-271 by USP29 promotes its stabilization. Deubiquitinated by USP27X, promoting its stabilization. Ubiquitinated at Lys-399 via 'Lys-63'-linked polyubiquitin chains by MARCHF8, leading to the inhibition of its DNA binding ability. In cycling cells, nucleosome-bound CGAS is ubiquitinated at Lys-409 and Lys-410 via 'Lys-48'-linked polyubiquitin chains by the ECS(SPSB3) complex, leading to its degradation: ubiquitination and degradation of nuclear CGAS during G1 and G2 phases is required to promote low intranuclear CGAS abundance before the next mitotic cycle. Post-translationally, sumoylated at Lys-217 and Lys-464 by TRIM38 in uninfected cells and during the early phase of viral infection, promoting its stability by preventing ubiquitination at Lys-271 and Lys-464, and subsequent degradation. Desumoylated by SENP2 during the late phase of viral infection. Sumoylation at Lys-335, Lys-372 and Lys-382 prevents DNA-binding, oligomerization and nucleotidyltransferase activity. Desumoylation at Lys-335, Lys-372 and Lys-382 by SENP7 relieves inhibition and activates CGAS. Polyglutamylated by TTLL6 at Glu-272, leading to impair DNA-binding activity. Monoglutamylated at Glu-302 by TTLL4, leading to impair the nucleotidyltransferase activity. Deglutamylated by AGBL5/CCP5 and AGBL6/CCP6. In terms of processing, acetylation at Lys-372, Lys-382 and Lys-402 inhibits the cyclic GMP-AMP synthase activity. Deacetylated upon cytosolic DNA challenge such as viral infections. Acetylation by KAT5 increases the cyclic GMP-AMP synthase activity by promoting DNA-binding and subsequent activation. Post-translationally, proteolytically cleaved by apoptotic caspases during apoptosis, leading to its inactivation. The damage of the nucleus and the mitochondria during apoptosis leads to leakage of nuclear and mitochondrial DNA, which activate CGAS: cleavage and inactivation during apoptosis in required to prevent cytokine overproduction. Cleaved by CASP7 and CASP3 during virus-induced apoptosis, thereby inactivating it and preventing cytokine overproduction. Cleaved by CASP1 upon DNA virus infection; the cleavage impairs cGAMP production. Also cleaved by the pyroptotic CASP4 during non-canonical inflammasome activation; does not cut at the same sites than CASP1. Degraded via selective autophagy following interaction with Irgm1. Irgm1 promotes CGAS recruitment to autophagosome membranes, promoting its SQSTM1/p62-dependent autophagic degradation. In terms of processing, poly-ADP-ribosylation at Glu-176 by PARP1 impairs DNA-binding, thereby preventing the cyclic GMP-AMP synthase activity. Post-translationally, palmitoylation at Cys-459 by ZDHHC18 impairs DNA-binding, thereby preventing the cyclic GMP-AMP synthase activity. Palmitoylation at Cys-392 and Cys-393 by ZDHHC9 promotes homodimerization and cyclic GMP-AMP synthase activity. Depalmitoylation at Cys-392 and Cys-393 by LYPLAL1 impairs homodimerization and cyclic GMP-AMP synthase activity. Monomethylated at Lys-491 by SETD7. Monomethylation promotes interaction with SGF29, preventing interaction between PARP1 nad SGF29. Demethylation by RIOX1 promotes interaction with PARP1, followed by PARP1 inactivation. In terms of processing, lactylation by AARS2 prevents ability to undergo liquid-liquid phase separation (LLPS), thereby inhibiting CGAS activation.

It is found in the nucleus. It localises to the chromosome. The protein localises to the cell membrane. The protein resides in the cytoplasm. Its subcellular location is the cytosol. The catalysed reaction is GTP + ATP = 2',3'-cGAMP + 2 diphosphate. It catalyses the reaction GTP + ATP = pppGp(2'-5')A + diphosphate. It carries out the reaction pppGp(2'-5')A = 2',3'-cGAMP + diphosphate. With respect to regulation, the enzyme activity is strongly increased by double-stranded DNA (dsDNA), but not by single-stranded DNA or RNA. DNA-binding induces the formation of liquid-like droplets in which CGAS is activated. Liquid-like droplets also create a selective environment that restricts entry of negative regulators, such as TREX1 or BANF1/BAF, allowing sensing of DNA. A number of mechanisms exist to restrict its activity toward self-DNA. The nucleotidyltransferase activity is inhibited in the nucleus via its association with nucleosomes: interacts with the acidic patch of histones H2A and H2B, thereby blocking DNA-binding and subsequent activation. CGAS is also inactive when associated with mitotic chromatin. Chromatin-bound CGAS cannot be activated by exogenous DNA in mitotic cells: phosphorylation of the N-terminal disordered part by AURKB during the G2-M transition blocks CGAS liquid phase separation and activation. Activity toward self-DNA is inhibited by BANF1/BAF upon acute loss of nuclear membrane integrity: BANF1/BAF acts by outcompeting CGAS for DNA-binding, thereby preventing CGAS activation. DNA-induced activation at micronuclei is also limited by TREX1, which degrades micronuclear DNA upon nuclear envelope rupture, thereby preventing CGAS activation. CGAS can be released from nucleosomes and activated by MRE11 component of the MRN complex, which displaces CGAS from acidic-patch-mediated sequestration. Acetylation at Lys-372, Lys-382 and Lys-402 inhibits the cyclic GMP-AMP synthase activity. Acetylation by KAT5 increases the cyclic GMP-AMP synthase activity by promoting DNA-binding and subsequent activation. Phosphorylation at Ser-291 suppresses the nucleotidyltransferase activity. Phosphorylation at Ser-420 promotes the cyclic GMP-AMP synthase activity. Phosphorylation at Thr-52 and Ser-199 inhibits its cyclic GMP-AMP synthase activity. Ubiquitination at Lys-372 via 'Lys-27'-linked polyubiquitination enhances the cyclic GMP-AMP synthase activity. Monoubiquitination at Lys-335 promotes oligomerization and subsequent activation. Sumoylation at Lys-335, Lys-372 and Lys-382 prevents DNA-binding, oligomerization and nucleotidyltransferase activity. The enzyme activity is impaired by the cleavage by CASP1. In addition to DNA, also activated by collided ribosomes upon translation stress: specifically binds collided ribosomes, promoting its activation and triggering type-I interferon production. In hematopoietic stem cells, binding to circular RNA cia-cGAS inhibits the cyclic GMP-AMP synthase activity. Strongly inhibited by compound RU.521, which is specific for mouse protein. In terms of biological role, nucleotidyltransferase that catalyzes the formation of cyclic GMP-AMP (2',3'-cGAMP) from ATP and GTP and plays a key role in innate immunity. Catalysis involves both the formation of a 2',5' phosphodiester linkage at the GpA step and the formation of a 3',5' phosphodiester linkage at the ApG step, producing c[G(2',5')pA(3',5')p]. Acts as a key DNA sensor: directly binds double-stranded DNA (dsDNA), inducing the formation of liquid-like droplets in which CGAS is activated, leading to synthesis of 2',3'-cGAMP, a second messenger that binds to and activates STING1, thereby triggering type-I interferon production. Preferentially binds long dsDNA (around 45 bp) and forms ladder-like networks that function cooperatively to stabilize individual cGAS-dsDNA complexes. Acts as a key foreign DNA sensor, the presence of double-stranded DNA (dsDNA) in the cytoplasm being a danger signal that triggers the immune responses. Has antiviral activity by sensing the presence of dsDNA from DNA viruses in the cytoplasm. Also acts as an innate immune sensor of infection by retroviruses by detecting the presence of reverse-transcribed DNA in the cytosol. Detection of retroviral reverse-transcribed DNA in the cytosol may be indirect and be mediated via interaction with PQBP1, which directly binds reverse-transcribed retroviral DNA. Also detects the presence of DNA from bacteria. 2',3'-cGAMP can be transferred from producing cells to neighboring cells through gap junctions, leading to promote STING1 activation and convey immune response to connecting cells. 2',3'-cGAMP can also be transferred between cells by virtue of packaging within viral particles contributing to IFN-induction in newly infected cells in a cGAS-independent but STING1-dependent manner. Also senses the presence of neutrophil extracellular traps (NETs) that are translocated to the cytosol following phagocytosis, leading to synthesis of 2',3'-cGAMP. In addition to foreign DNA, can also be activated by endogenous nuclear or mitochondrial DNA. When self-DNA leaks into the cytosol during cellular stress (such as mitochondrial stress, DNA damage, mitotic arrest or senescence), or is present in form of cytosolic micronuclei, CGAS is activated leading to a state of sterile inflammation. Acts as a regulator of cellular senescence by binding to cytosolic chromatin fragments that are present in senescent cells, leading to trigger type-I interferon production via STING1 and promote cellular senescence. Also involved in the inflammatory response to genome instability and double-stranded DNA breaks: acts by localizing to micronuclei arising from genome instability. Micronuclei, which as frequently found in cancer cells, consist of chromatin surrounded by its own nuclear membrane: following breakdown of the micronuclear envelope, a process associated with chromothripsis, CGAS binds self-DNA exposed to the cytosol, leading to 2',3'-cGAMP synthesis and subsequent activation of STING1 and type-I interferon production. In a healthy cell, CGAS is however kept inactive even in cellular events that directly expose it to self-DNA, such as mitosis, when cGAS associates with chromatin directly after nuclear envelope breakdown or remains in the form of postmitotic persistent nuclear cGAS pools bound to chromatin. Nuclear CGAS is inactivated by chromatin via direct interaction with nucleosomes, which block CGAS from DNA binding and thus prevent CGAS-induced autoimmunity. Also acts as a suppressor of DNA repair in response to DNA damage: inhibits homologous recombination repair by interacting with PARP1, the CGAS-PARP1 interaction leading to impede the formation of the PARP1-TIMELESS complex. In addition to DNA, also sense translation stress: in response to translation stress, translocates to the cytosol and associates with collided ribosomes, promoting its activation and triggering type-I interferon production. In Mus musculus (Mouse), this protein is Cyclic GMP-AMP synthase.